We begin with the raw amino-acid sequence, 543 residues long: Allantoate permease (543 aa).

The Cytoplasmic portion of the chain corresponds to 1-80 (MSADASTNSN…PEEDRKLRWK (80 aa)). A helical transmembrane segment spans residues 81-97 (IDYCMFPLMCILYAVQF). At 98-123 (MDKISTSSAAVMGLRTDLKMHGDQYS) the chain is on the extracellular side. A helical transmembrane segment spans residues 124 to 145 (WVTSAFYFGYLFMNLGPVQFIF). Topologically, residues 146 to 154 (QRTSHMSKM) are cytoplasmic. Residues 155-171 (LAVFIVIWGMLLALHAA) form a helical membrane-spanning segment. At 172–178 (PTVKYPS) the chain is on the extracellular side. A helical membrane pass occupies residues 179–200 (FIVLRVLLGCAESVVTPCFTII). The Cytoplasmic portion of the chain corresponds to 201-213 (TAQYWKTEEQFTR). The helical transmembrane segment at 214-237 (VSIWFGMNGLGSILINAIAYGVYI) threads the bilayer. The Extracellular segment spans residues 238–248 (HQDSYAIKGWR). The chain crosses the membrane as a helical span at residues 249–269 (TLFVITGVITIFIGILIFLWI). Residues 270–317 (PDDPSKARFLSKREKLMVVQRIRSNQQGFGNHEIKKYQIIEALKDVRT) lie on the Cytoplasmic side of the membrane. Residues 318 to 342 (WLYFLFTVSSNIPNGGISSFMSILL) traverse the membrane as a helical segment. The Extracellular portion of the chain corresponds to 343 to 352 (NSDFGYSSKE). A helical membrane pass occupies residues 353-377 (TLLMGLPTGAVELVGCPLFGILAVY). Over 378-389 (AANKKIPFWKYK) the chain is Cytoplasmic. Residues 390–411 (LSWAIFAAVLALIASCMLGFAT) traverse the membrane as a helical segment. The Extracellular portion of the chain corresponds to 412-417 (NSKKAR). Residues 418–435 (LAGAYLWYISPVSFICVL) traverse the membrane as a helical segment. Over 436 to 453 (SNISANSSGYSKKWTVSS) the chain is Cytoplasmic. A helical membrane pass occupies residues 454–472 (INLVAYAAANLAGPQTFIA). Topologically, residues 473-482 (KQAPKYHGAK) are extracellular. Residues 483 to 504 (VAMVVCYAVMIVLLSILLIVNL) form a helical membrane-spanning segment. Residues 505 to 543 (RENKRRDKIAAERGFPEETENLEFSDLTDFENPNFRYTL) lie on the Cytoplasmic side of the membrane.

Belongs to the major facilitator superfamily. Allantoate permease family.

It is found in the membrane. Its function is as follows. Component of the allantoate transport system. This chain is Allantoate permease (DAL5), found in Saccharomyces cerevisiae (strain ATCC 204508 / S288c) (Baker's yeast).